The sequence spans 202 residues: Recombination protein RecR (202 aa).

Residues 56-71 form a C4-type zinc finger; that stretch reads CVVCGTVSDKEHCRIC. One can recognise a Toprim domain in the interval 79–179; it reads TVICVVEEPK…TVSRLASGLP (101 aa).

The protein belongs to the RecR family.

Its function is as follows. May play a role in DNA repair. It seems to be involved in an RecBC-independent recombinational process of DNA repair. It may act with RecF and RecO. This Rhodococcus jostii (strain RHA1) protein is Recombination protein RecR.